A 202-amino-acid polypeptide reads, in one-letter code: Molybdenum cofactor guanylyltransferase (202 aa).

Residues 9–11 (LAG), K22, D70, and D96 each bind GTP. D96 is a binding site for Mg(2+).

The protein belongs to the MobA family. Monomer. It depends on Mg(2+) as a cofactor.

It localises to the cytoplasm. It carries out the reaction Mo-molybdopterin + GTP + H(+) = Mo-molybdopterin guanine dinucleotide + diphosphate. Transfers a GMP moiety from GTP to Mo-molybdopterin (Mo-MPT) cofactor (Moco or molybdenum cofactor) to form Mo-molybdopterin guanine dinucleotide (Mo-MGD) cofactor. The protein is Molybdenum cofactor guanylyltransferase of Desulfosudis oleivorans (strain DSM 6200 / JCM 39069 / Hxd3) (Desulfococcus oleovorans).